Reading from the N-terminus, the 424-residue chain is Geranylgeranyl pyrophosphate synthase D (424 aa).

The tract at residues 42 to 73 (PSATWPSVPKVHKRNRSTSLSDQQTAKKAHAN) is disordered. Over residues 58-67 (STSLSDQQTA) the composition is skewed to polar residues. Residues Lys147, Arg150, and His179 each coordinate isopentenyl diphosphate. Residues Asp186 and Asp190 each contribute to the Mg(2+) site. Residue Arg195 coordinates dimethylallyl diphosphate. Arg196 provides a ligand contact to isopentenyl diphosphate. Residues Lys274, Thr275, Gln311, Lys328, and Lys338 each coordinate dimethylallyl diphosphate.

The protein belongs to the FPP/GGPP synthase family. The cofactor is Mg(2+).

Its subcellular location is the cytoplasm. The enzyme catalyses isopentenyl diphosphate + dimethylallyl diphosphate = (2E)-geranyl diphosphate + diphosphate. It carries out the reaction isopentenyl diphosphate + (2E)-geranyl diphosphate = (2E,6E)-farnesyl diphosphate + diphosphate. It catalyses the reaction isopentenyl diphosphate + (2E,6E)-farnesyl diphosphate = (2E,6E,10E)-geranylgeranyl diphosphate + diphosphate. Its pathway is isoprenoid biosynthesis; farnesyl diphosphate biosynthesis; farnesyl diphosphate from geranyl diphosphate and isopentenyl diphosphate: step 1/1. It participates in isoprenoid biosynthesis; geranyl diphosphate biosynthesis; geranyl diphosphate from dimethylallyl diphosphate and isopentenyl diphosphate: step 1/1. It functions in the pathway isoprenoid biosynthesis; geranylgeranyl diphosphate biosynthesis; geranylgeranyl diphosphate from farnesyl diphosphate and isopentenyl diphosphate: step 1/1. Functionally, catalyzes the trans-addition of the 3 molecules of isopentenyl diphosphate (IPP) onto dimethylallyl diphosphate (DMAPP) to form geranylgeranyl pyrophosphate (GGDP). The protein is Geranylgeranyl pyrophosphate synthase D (GGS-D) of Phomopsis amygdali (Fusicoccum amygdali).